The primary structure comprises 408 residues: Argininosuccinate synthase (408 aa).

8–16 (AYSGGLDTS) serves as a coordination point for ATP. Tyr86 serves as a coordination point for L-citrulline. Gly116 contacts ATP. L-aspartate contacts are provided by Thr118, Asn122, and Asp123. Residue Asn122 participates in L-citrulline binding. The L-citrulline site is built by Arg126, Ser174, Glu259, and Tyr271.

The protein belongs to the argininosuccinate synthase family. Type 1 subfamily. In terms of assembly, homotetramer.

The protein localises to the cytoplasm. The enzyme catalyses L-citrulline + L-aspartate + ATP = 2-(N(omega)-L-arginino)succinate + AMP + diphosphate + H(+). The protein operates within amino-acid biosynthesis; L-arginine biosynthesis; L-arginine from L-ornithine and carbamoyl phosphate: step 2/3. The chain is Argininosuccinate synthase from Leuconostoc mesenteroides subsp. mesenteroides (strain ATCC 8293 / DSM 20343 / BCRC 11652 / CCM 1803 / JCM 6124 / NCDO 523 / NBRC 100496 / NCIMB 8023 / NCTC 12954 / NRRL B-1118 / 37Y).